Consider the following 131-residue polypeptide: Small ribosomal subunit protein uS11 (131 aa).

This sequence belongs to the universal ribosomal protein uS11 family. In terms of assembly, part of the 30S ribosomal subunit. Interacts with proteins S7 and S18. Binds to IF-3.

Located on the platform of the 30S subunit, it bridges several disparate RNA helices of the 16S rRNA. Forms part of the Shine-Dalgarno cleft in the 70S ribosome. This is Small ribosomal subunit protein uS11 from Halorhodospira halophila (strain DSM 244 / SL1) (Ectothiorhodospira halophila (strain DSM 244 / SL1)).